Consider the following 163-residue polypeptide: Ribosome maturation factor RimP (163 aa).

This sequence belongs to the RimP family.

The protein resides in the cytoplasm. Its function is as follows. Required for maturation of 30S ribosomal subunits. The protein is Ribosome maturation factor RimP of Bordetella petrii (strain ATCC BAA-461 / DSM 12804 / CCUG 43448).